The chain runs to 85 residues: Neurtoxin 10 (85 aa).

Residues 1 to 23 (MKFCVAVSLLIIASMAGVISVSG) form the signal peptide. Residues 24–85 (YDVYPRDYAE…NFLSVIWKHC (62 aa)) enclose the LCN-type CS-alpha/beta domain. 3 disulfides stabilise this stretch: C38/C60, C46/C65, and C50/C67.

Belongs to the long (3 C-C) scorpion toxin superfamily. In terms of tissue distribution, expressed by the venom gland.

Its subcellular location is the secreted. In Lychas mucronatus (Chinese swimming scorpion), this protein is Neurtoxin 10.